Consider the following 26-residue polypeptide: Melittin (26 aa).

At Gly-1 the chain carries N-formylglycine; partial. The residue at position 26 (Glu-26) is a Glutamic acid 1-amide.

It belongs to the melittin family. As to quaternary structure, monomer (in solution and for integration into membranes), homotetramer (in solution and potentially as a toroidal pore in membranes), and potenially homomultimer (as a toroidal pore in membranes). In terms of tissue distribution, expressed by the venom gland.

The protein resides in the secreted. It is found in the target cell membrane. In terms of biological role, main toxin of bee venom with strong hemolytic activity and antimicrobial activity. It has enhancing effects on bee venom phospholipase A2 activity. This amphipathic toxin binds to negatively charged membrane surface and forms pore by inserting into lipid bilayers inducing the leakage of ions and molecules and the enhancement of permeability that ultimately leads to cell lysis. It acts as a voltage-gated pore with higher selectivity for anions over cations. The ion conductance has been shown to be voltage-dependent. Self-association of melittin in membranes is promoted by high ionic strength, but not by the presence of negatively charged lipids. In vivo, intradermal injection into healthy human volunteers produce sharp pain sensation and an inflammatory response. It produces pain by activating primary nociceptor cells directly and indirectly due to its ability to activate plasma membrane phospholipase A2 and its pore-forming activity. This Apis dorsata (Giant honeybee) protein is Melittin (MELT).